The sequence spans 189 residues: Peptidyl-tRNA hydrolase (189 aa).

Residue Tyr-15 coordinates tRNA. Residue His-20 is the Proton acceptor of the active site. 3 residues coordinate tRNA: Phe-66, Asn-68, and Asn-114.

The protein belongs to the PTH family. Monomer.

Its subcellular location is the cytoplasm. The catalysed reaction is an N-acyl-L-alpha-aminoacyl-tRNA + H2O = an N-acyl-L-amino acid + a tRNA + H(+). In terms of biological role, hydrolyzes ribosome-free peptidyl-tRNAs (with 1 or more amino acids incorporated), which drop off the ribosome during protein synthesis, or as a result of ribosome stalling. Its function is as follows. Catalyzes the release of premature peptidyl moieties from peptidyl-tRNA molecules trapped in stalled 50S ribosomal subunits, and thus maintains levels of free tRNAs and 50S ribosomes. The sequence is that of Peptidyl-tRNA hydrolase from Streptococcus gordonii (strain Challis / ATCC 35105 / BCRC 15272 / CH1 / DL1 / V288).